We begin with the raw amino-acid sequence, 510 residues long: Bone morphogenetic protein 6 (510 aa).

An N-terminal signal peptide occupies residues Met1–Ser20. The propeptide occupies Cys21–Arg371. 2 disordered regions span residues Pro87–Ser129 and Asn143–Ser199. Residues Pro106–Gln116 are compositionally biased toward low complexity. N-linked (GlcNAc...) asparagine glycosylation is found at Asn238, Asn266, Asn383, Asn401, and Asn451. The interval Thr370 to Gly402 is disordered. Residues Asp390–Asn401 are compositionally biased toward polar residues. Cystine bridges form between Cys409–Cys475, Cys438–Cys507, and Cys442–Cys509.

This sequence belongs to the TGF-beta family. In terms of assembly, interacts with SOSTDC1. Interacts (when glycosylated) with type I receptor ACVR1; the interaction may induce HAMP expression. Interacts with type II receptor ACVR2B. Interacts with Hemojuvelin/HJV. Interacts with ERFE; the interaction inhibits BMP-induced transcription of HAMP. Interacts with BMPR1A/ALK3. Forms heterodimers with BMP2 in vitro; the heterodimer then binds to its receptor BMPR1A /ALK3 and may induce HAMP expression. Expressed in the lung. Low levels seen in the kidney.

It localises to the secreted. In terms of biological role, growth factor of the TGF-beta superfamily that plays essential roles in many developmental processes including cartilage and bone formation. Also plays an important role in the regulation of HAMP/hepcidin expression and iron metabolism by acting as a ligand for hemojuvelin/HJV. Also acts to promote expression of HAMP, potentially via the interaction with its receptor BMPR1A/ALK3. Initiates the canonical BMP signaling cascade by associating with type I receptor ACVR1 and type II receptor ACVR2B. In turn, ACVR1 propagates signal by phosphorylating SMAD1/5/8 that travel to the nucleus and act as activators and repressors of transcription of target. Can also signal through non-canonical pathway such as TAZ-Hippo signaling cascade to modulate VEGF signaling by regulating VEGFR2 expression. The chain is Bone morphogenetic protein 6 (Bmp6) from Mus musculus (Mouse).